Reading from the N-terminus, the 138-residue chain is Large ribosomal subunit protein uL16 (138 aa).

The interval 1-22 (MQQPARTKYRKQQKGRNKGIAT) is disordered. Basic residues predominate over residues 7–17 (TKYRKQQKGRN).

Belongs to the universal ribosomal protein uL16 family. As to quaternary structure, part of the 50S ribosomal subunit.

Binds 23S rRNA and is also seen to make contacts with the A and possibly P site tRNAs. The sequence is that of Large ribosomal subunit protein uL16 from Nitrosospira multiformis (strain ATCC 25196 / NCIMB 11849 / C 71).